The following is a 192-amino-acid chain: Fumarylpyruvate hydrolase (192 aa).

The a divalent metal cation site is built by Glu41, Glu43, and Asp72.

It belongs to the FAH family. The cofactor is Mg(2+). Mn(2+) is required as a cofactor.

It carries out the reaction 3-fumarylpyruvate + H2O = fumarate + pyruvate + H(+). Its pathway is aromatic compound metabolism; naphthalene degradation. Involved in the catabolism of gentisate (2,5-dihydroxybenzoate) a key intermediates in the aerobic pathways for the metabolism of a large number of aromatic compoun such as naphthalene. Catalyzes the hydrolytic cleavage of fumarylpyruvate to form fumarate and pyruvate. This Ralstonia sp protein is Fumarylpyruvate hydrolase.